The primary structure comprises 541 residues: Arginine--tRNA ligase (541 aa).

A 'HIGH' region motif is present at residues 119–129; the sequence is ANPTGPLHIGH.

Belongs to the class-I aminoacyl-tRNA synthetase family. Monomer.

The protein localises to the cytoplasm. The enzyme catalyses tRNA(Arg) + L-arginine + ATP = L-arginyl-tRNA(Arg) + AMP + diphosphate. The chain is Arginine--tRNA ligase from Helicobacter pylori (strain Shi470).